Consider the following 208-residue polypeptide: Small ribosomal subunit protein uS4 (208 aa).

Residues 95–157 (RRIDNIVYRA…DSLKKLIRSN (63 aa)) form the S4 RNA-binding domain.

The protein belongs to the universal ribosomal protein uS4 family. Part of the 30S ribosomal subunit. Contacts protein S5. The interaction surface between S4 and S5 is involved in control of translational fidelity.

In terms of biological role, one of the primary rRNA binding proteins, it binds directly to 16S rRNA where it nucleates assembly of the body of the 30S subunit. Functionally, with S5 and S12 plays an important role in translational accuracy. The polypeptide is Small ribosomal subunit protein uS4 (Borrelia garinii subsp. bavariensis (strain ATCC BAA-2496 / DSM 23469 / PBi) (Borreliella bavariensis)).